A 374-amino-acid chain; its full sequence is Flap endonuclease 1 (374 aa).

An N-domain region spans residues M1–R105. Position 34 (D34) interacts with Mg(2+). DNA-binding residues include R47 and R71. Mg(2+) is bound by residues D87, E159, E161, D180, and D182. Residues D123–H254 are I-domain. Residue E159 coordinates DNA. Residues G232 and D234 each coordinate DNA. A Mg(2+)-binding site is contributed by D234. The interaction with PCNA stretch occupies residues V339–F347. Residues D353 to K374 are disordered.

It belongs to the XPG/RAD2 endonuclease family. FEN1 subfamily. As to quaternary structure, interacts with PCNA. Three molecules of RAD27 bind to one PCNA trimer with each molecule binding to one PCNA monomer. PCNA stimulates the nuclease activity without altering cleavage specificity. Requires Mg(2+) as cofactor. Phosphorylated. Phosphorylation upon DNA damage induces relocalization to the nuclear plasma.

The protein resides in the nucleus. The protein localises to the nucleolus. It localises to the nucleoplasm. It is found in the mitochondrion. In terms of biological role, structure-specific nuclease with 5'-flap endonuclease and 5'-3' exonuclease activities involved in DNA replication and repair. During DNA replication, cleaves the 5'-overhanging flap structure that is generated by displacement synthesis when DNA polymerase encounters the 5'-end of a downstream Okazaki fragment. It enters the flap from the 5'-end and then tracks to cleave the flap base, leaving a nick for ligation. Also involved in the long patch base excision repair (LP-BER) pathway, by cleaving within the apurinic/apyrimidinic (AP) site-terminated flap. Acts as a genome stabilization factor that prevents flaps from equilibrating into structures that lead to duplications and deletions. Also possesses 5'-3' exonuclease activity on nicked or gapped double-stranded DNA, and exhibits RNase H activity. Also involved in replication and repair of rDNA and in repairing mitochondrial DNA. In Candida tropicalis (strain ATCC MYA-3404 / T1) (Yeast), this protein is Flap endonuclease 1.